A 270-amino-acid chain; its full sequence is Molybdenum-pterin-binding protein MopB (270 aa).

Mop domains lie at 131–197 (RTSA…LLAG) and 203–269 (RLSV…ILAL).

The protein belongs to the ModE family.

This is Molybdenum-pterin-binding protein MopB (mopB) from Rhodobacter capsulatus (Rhodopseudomonas capsulata).